Here is a 305-residue protein sequence, read N- to C-terminus: Thioredoxin reductase (305 aa).

28 to 35 (LGIETSSQ) is a binding site for FAD. Cys129 and Cys132 are joined by a disulfide. 272–281 (DCCDWIYRQA) provides a ligand contact to FAD.

Belongs to the class-II pyridine nucleotide-disulfide oxidoreductase family. As to quaternary structure, homodimer. Requires FAD as cofactor.

The protein localises to the cytoplasm. The enzyme catalyses [thioredoxin]-dithiol + NADP(+) = [thioredoxin]-disulfide + NADPH + H(+). The chain is Thioredoxin reductase (TRXB) from Spironucleus barkhanus.